Here is a 322-residue protein sequence, read N- to C-terminus: Ferrochelatase (322 aa).

Fe cation contacts are provided by His194 and Glu275.

The protein belongs to the ferrochelatase family.

The protein resides in the cytoplasm. The catalysed reaction is heme b + 2 H(+) = protoporphyrin IX + Fe(2+). The protein operates within porphyrin-containing compound metabolism; protoheme biosynthesis; protoheme from protoporphyrin-IX: step 1/1. Functionally, catalyzes the ferrous insertion into protoporphyrin IX. This chain is Ferrochelatase, found in Yersinia enterocolitica.